The primary structure comprises 232 residues: Orotidine 5'-phosphate decarboxylase (232 aa).

Substrate is bound by residues aspartate 13, lysine 35, 62–71, threonine 122, arginine 182, glutamine 191, glycine 211, and arginine 212; that span reads DLKFHDIPNT. Residue lysine 64 is the Proton donor of the active site.

This sequence belongs to the OMP decarboxylase family. Type 1 subfamily. As to quaternary structure, homodimer.

It carries out the reaction orotidine 5'-phosphate + H(+) = UMP + CO2. It functions in the pathway pyrimidine metabolism; UMP biosynthesis via de novo pathway; UMP from orotate: step 2/2. Catalyzes the decarboxylation of orotidine 5'-monophosphate (OMP) to uridine 5'-monophosphate (UMP). This Pseudomonas syringae pv. syringae (strain B728a) protein is Orotidine 5'-phosphate decarboxylase.